A 62-amino-acid chain; its full sequence is Beta-defensin 133 (62 aa).

Positions 1–21 (MKIHIFLFVLFFFLVPIATRG) are cleaved as a signal peptide. 2 cysteine pairs are disulfide-bonded: cysteine 32/cysteine 60 and cysteine 39/cysteine 53.

Belongs to the beta-defensin family.

The protein localises to the secreted. In terms of biological role, has antibacterial activity. The sequence is that of Beta-defensin 133 (DEFB133) from Pan troglodytes (Chimpanzee).